The chain runs to 49 residues: Large ribosomal subunit protein bL33 (49 aa).

This sequence belongs to the bacterial ribosomal protein bL33 family.

This Moorella thermoacetica (strain ATCC 39073 / JCM 9320) protein is Large ribosomal subunit protein bL33.